The chain runs to 226 residues: Uracil-DNA glycosylase (226 aa).

Asp-64 (proton acceptor) is an active-site residue.

Belongs to the uracil-DNA glycosylase (UDG) superfamily. UNG family.

The protein resides in the cytoplasm. It catalyses the reaction Hydrolyzes single-stranded DNA or mismatched double-stranded DNA and polynucleotides, releasing free uracil.. Functionally, excises uracil residues from the DNA which can arise as a result of misincorporation of dUMP residues by DNA polymerase or due to deamination of cytosine. This chain is Uracil-DNA glycosylase, found in Proteus mirabilis (strain HI4320).